Here is a 122-residue protein sequence, read N- to C-terminus: Large ribosomal subunit protein bL12 (122 aa).

The protein belongs to the bacterial ribosomal protein bL12 family. Homodimer. Part of the ribosomal stalk of the 50S ribosomal subunit. Forms a multimeric L10(L12)X complex, where L10 forms an elongated spine to which 2 to 4 L12 dimers bind in a sequential fashion. Binds GTP-bound translation factors.

Functionally, forms part of the ribosomal stalk which helps the ribosome interact with GTP-bound translation factors. Is thus essential for accurate translation. The sequence is that of Large ribosomal subunit protein bL12 from Dichelobacter nodosus (strain VCS1703A).